The sequence spans 352 residues: MKQRKIIHIDCDCFYAAIEMRDDPSLANRPLAVGGSADRRGVIATCNYEARAYGVRSAMSSRHALKLCPDLLIVKPRFEVYRSVSREIHGIFRQFTDLIEPLSLDEAYLDVSDSPHFAGSATRIAQEIRRRVAQELHITVSAGVAPNKFLAKIASDWRKPNGLFVITPDQVDEFVTALPVSKLHGVGKVTADKLTRLGIRTCLDLRDWNKLALVREFGSFGERLWRLAHGIDEREVKVDSRRQSLSVEHTYDQDLPDLQSCLEKLPALLEEMNGRLQRLDASYRPDKPFVKVKFHDFTQTTLEQAGASRDLDSYRQLLASAHARGDKPVRLLGVGVRLHDLRGRQEQLELFA.

The UmuC domain occupies 6–187; the sequence is IIHIDCDCFY…LPVSKLHGVG (182 aa). Asp10 and Asp105 together coordinate Mg(2+). Glu106 is an active-site residue.

The protein belongs to the DNA polymerase type-Y family. In terms of assembly, monomer. Mg(2+) serves as cofactor.

Its subcellular location is the cytoplasm. It catalyses the reaction DNA(n) + a 2'-deoxyribonucleoside 5'-triphosphate = DNA(n+1) + diphosphate. In terms of biological role, poorly processive, error-prone DNA polymerase involved in untargeted mutagenesis. Copies undamaged DNA at stalled replication forks, which arise in vivo from mismatched or misaligned primer ends. These misaligned primers can be extended by PolIV. Exhibits no 3'-5' exonuclease (proofreading) activity. May be involved in translesional synthesis, in conjunction with the beta clamp from PolIII. The polypeptide is DNA polymerase IV (Ectopseudomonas mendocina (strain ymp) (Pseudomonas mendocina)).